The sequence spans 194 residues: ATP-dependent Clp protease proteolytic subunit (194 aa).

Ser-98 functions as the Nucleophile in the catalytic mechanism. Residue His-123 is part of the active site.

Belongs to the peptidase S14 family. In terms of assembly, component of the chloroplastic Clp protease core complex.

It is found in the plastid. The protein localises to the cyanelle. It carries out the reaction Hydrolysis of proteins to small peptides in the presence of ATP and magnesium. alpha-casein is the usual test substrate. In the absence of ATP, only oligopeptides shorter than five residues are hydrolyzed (such as succinyl-Leu-Tyr-|-NHMec, and Leu-Tyr-Leu-|-Tyr-Trp, in which cleavage of the -Tyr-|-Leu- and -Tyr-|-Trp bonds also occurs).. In terms of biological role, cleaves peptides in various proteins in a process that requires ATP hydrolysis. Has a chymotrypsin-like activity. Plays a major role in the degradation of misfolded proteins. In Cyanophora paradoxa, this protein is ATP-dependent Clp protease proteolytic subunit (clpP-A).